Consider the following 179-residue polypeptide: UPF0227 protein Shewana3_2292 (179 aa).

The protein belongs to the UPF0227 family.

The sequence is that of UPF0227 protein Shewana3_2292 from Shewanella sp. (strain ANA-3).